Here is a 167-residue protein sequence, read N- to C-terminus: CKLF-like MARVEL transmembrane domain-containing protein 7 (167 aa).

The 127-residue stretch at 32-158 folds into the MARVEL domain; it reads YPLTHGALFK…SLWLSYKITC (127 aa). 4 helical membrane-spanning segments follow: residues 35–55, 69–89, 102–122, and 132–152; these read THGALFKVAQMVTLLIAFICV, FEVVTMCDLIMILIFYLVHLF, LSELLHYLIGTLLLLIASIVI, and LVAGAIFGFLASFLCLASLWL.

This sequence belongs to the chemokine-like factor family.

It localises to the membrane. In Mus musculus (Mouse), this protein is CKLF-like MARVEL transmembrane domain-containing protein 7 (Cmtm7).